Reading from the N-terminus, the 389-residue chain is Migration and invasion-inhibitory protein (389 aa).

The segment covering Leu44–Glu54 has biased composition (low complexity). Disordered stretches follow at residues Leu44–Leu80 and Lys131–Pro150. Polar residues predominate over residues Ser58–Ser70. Residues Gln71–Leu80 show a composition bias toward basic and acidic residues. Residue Ser309 is modified to Phosphoserine.

As to quaternary structure, interacts with IGFBP2.

Its function is as follows. Inhibits glioma cells invasion and down-regulates adhesion- and motility-associated genes such as NFKB2 and ICAM1. Exhibits opposing effects to IGFBP2 on cell invasion. This is Migration and invasion-inhibitory protein (Miip) from Rattus norvegicus (Rat).